A 205-amino-acid chain; its full sequence is RNA pyrophosphohydrolase (205 aa).

The region spanning Gly6 to Arg149 is the Nudix hydrolase domain. A Nudix box motif is present at residues Gly38 to Gly59. Residues Gly178 to Asp205 are disordered. Residues Pro187–Gly196 are compositionally biased toward basic residues.

This sequence belongs to the Nudix hydrolase family. RppH subfamily. The cofactor is a divalent metal cation.

In terms of biological role, accelerates the degradation of transcripts by removing pyrophosphate from the 5'-end of triphosphorylated RNA, leading to a more labile monophosphorylated state that can stimulate subsequent ribonuclease cleavage. In Xanthomonas axonopodis pv. citri (strain 306), this protein is RNA pyrophosphohydrolase.